We begin with the raw amino-acid sequence, 428 residues long: Trigger factor (428 aa).

Positions 163–248 constitute a PPIase FKBP-type domain; sequence KDIVTIDFEG…VKEIKAKELP (86 aa).

It belongs to the FKBP-type PPIase family. Tig subfamily.

The protein resides in the cytoplasm. The enzyme catalyses [protein]-peptidylproline (omega=180) = [protein]-peptidylproline (omega=0). Functionally, involved in protein export. Acts as a chaperone by maintaining the newly synthesized protein in an open conformation. Functions as a peptidyl-prolyl cis-trans isomerase. This Lachnoclostridium phytofermentans (strain ATCC 700394 / DSM 18823 / ISDg) (Clostridium phytofermentans) protein is Trigger factor.